We begin with the raw amino-acid sequence, 629 residues long: Dapper homolog 3 (629 aa).

Serine 6 is modified (phosphoserine). Disordered regions lie at residues 50–76 (PGMGGAEAEDEEDADEDEDAAAARRAA) and 105–574 (GGLE…GGLV). The segment covering 56-69 (EAEDEEDADEDEDA) has biased composition (acidic residues). Residues 63–87 (ADEDEDAAAARRAAAALEEQLEALP) adopt a coiled-coil conformation. Low complexity predominate over residues 105–150 (GGLEQESGRSSGFYEDPSSTGGPDSPPSTFCGDSGFSGSSSYGRLG). A phosphoserine mark is found at serine 165 and serine 239. Residue arginine 258 is modified to Omega-N-methylarginine. Basic and acidic residues predominate over residues 301-311 (PAREPSLERVG). The segment covering 316-335 (SPAALSRAWASSWESEAAPE) has biased composition (low complexity). A compositionally biased stretch (pro residues) spans 336–348 (PAAPPAAPSPPDS). Serine 426 and serine 478 each carry phosphoserine. Over residues 525–535 (SAGRLGPLGRR) the composition is skewed to low complexity. A compositionally biased stretch (gly residues) spans 536–546 (GPAGGVGGGYG). Positions 547 to 568 (ESESSASEGESPAFSSASSDSD) are enriched in low complexity. The PDZ-binding signature appears at 626-629 (MTTV).

It belongs to the dapper family. In terms of assembly, can form homodimers and heterodimers with DACT1 or DACT3. Interacts with CSNK1D, PKA catalytic subunit, PKC-type kinase, DVL1, DVL3, VANGL1, VANGL2 and CTNND1. Interacts with DVL2.

In terms of biological role, may be involved in regulation of intracellular signaling pathways during development. Specifically thought to play a role in canonical and/or non-canonical Wnt signaling pathways through interaction with DSH (Dishevelled) family proteins. In Homo sapiens (Human), this protein is Dapper homolog 3 (DACT3).